Consider the following 256-residue polypeptide: MAVGKNKRLSKGKKGLKKKTQDPFARKDWYGIKAPAPFNVRDVGKTLVNRTTGLKNANDALKGRIFEVSLADLQKDEDHSFRKVKLRVDEIQGKNCLTNFHGLDFTSDKLRSLVRKWQTLIEANITVKTTDDYLLRLFAIAFTKRRPNQVKKTTYAASSQIRAIRRKMTEIIQREASSCTLTQLTSKLIPEVIGREIEKATQGIYPLQNVHIRKVKLLKQPKFDLGALMSLHGESGSDEAGQKVEREFKETVLESV.

The segment covering 1–18 has biased composition (basic residues); it reads MAVGKNKRLSKGKKGLKK. The disordered stretch occupies residues 1–22; it reads MAVGKNKRLSKGKKGLKKKTQD. An N-acetylalanine; partial modification is found at alanine 2.

The protein belongs to the eukaryotic ribosomal protein eS1 family. Component of the small ribosomal subunit (SSU). Mature N.crassa ribosomes consist of a small (40S) and a large (60S) subunit. The 40S small subunit contains 1 molecule of ribosomal RNA (18S rRNA) and at least 32 different proteins. The large 60S subunit contains 3 rRNA molecules (26S, 5.8S and 5S rRNA) and at least 42 different proteins.

It is found in the cytoplasm. Component of the ribosome, a large ribonucleoprotein complex responsible for the synthesis of proteins in the cell. The small ribosomal subunit (SSU) binds messenger RNAs (mRNAs) and translates the encoded message by selecting cognate aminoacyl-transfer RNA (tRNA) molecules. The large subunit (LSU) contains the ribosomal catalytic site termed the peptidyl transferase center (PTC), which catalyzes the formation of peptide bonds, thereby polymerizing the amino acids delivered by tRNAs into a polypeptide chain. The nascent polypeptides leave the ribosome through a tunnel in the LSU and interact with protein factors that function in enzymatic processing, targeting, and the membrane insertion of nascent chains at the exit of the ribosomal tunnel. This chain is Small ribosomal subunit protein eS1 (rps1), found in Neurospora crassa (strain ATCC 24698 / 74-OR23-1A / CBS 708.71 / DSM 1257 / FGSC 987).